Consider the following 616-residue polypeptide: KIF-binding protein (616 aa).

Residues 52 to 78 form a disordered region; sequence EEEEESEAEGKEERRDGPESGGRRGES. Basic and acidic residues predominate over residues 59 to 78; that stretch reads AEGKEERRDGPESGGRRGES.

Belongs to the KIF-binding protein family.

The protein resides in the cytoplasm. Its subcellular location is the cytoskeleton. Its function is as follows. Activator of KIF1B plus-end-directed microtubule motor activity. Required for organization of axonal microtubules, and axonal outgrowth and maintenance during peripheral and central nervous system development. This chain is KIF-binding protein, found in Xenopus tropicalis (Western clawed frog).